The chain runs to 492 residues: Amphoterin-induced protein 1 (492 aa).

Positions 1–27 (MQPQRDLRGLWLLLLSVFLLLFEVARA) are cleaved as a signal peptide. The LRRNT domain occupies 28–61 (GRSVVSCPANCLCASNILSCSKQQLPNVPQSLPS). The Extracellular segment spans residues 28-371 (GRSVVSCPAN…LHGHHDTLNT (344 aa)). Cystine bridges form between Cys34-Cys40 and Cys38-Cys47. 6 LRR repeats span residues 62 to 83 (YTALLDLSHNNLSRLRAEWTPT), 87 to 108 (NLHSLLLSHNHLNFISSEAFVP), 111 to 132 (NLRYLDLSSNHLHTLDEFLFSD), 135 to 156 (ALEVLLLYNNHIVVVDRNAFED), 159 to 180 (QLQKLYLSQNQISRFPVELIKD), and 186 to 206 (KLMLLDLSSNKLKKLPLTDLQ). An N-linked (GlcNAc...) asparagine glycan is attached at Asn72. Residues 208–272 (LPAWVKNGLY…FSLDFFNCSE (65 aa)) enclose the LRRCT domain. 3 cysteine pairs are disulfide-bonded: Cys225/Cys253, Cys227/Cys270, and Cys290/Cys340. N-linked (GlcNAc...) asparagine glycans are attached at residues Asn269, Asn315, Asn348, and Asn359. One can recognise an Ig-like C2-type domain in the interval 269-352 (NCSEYKESAW…MGETFNETLS (84 aa)). A helical membrane pass occupies residues 372–392 (AYTTLVGCILSVVLVLIYLYL). The Cytoplasmic portion of the chain corresponds to 393-492 (TPCRCWCRGV…SVFSDTPIVV (100 aa)). The tract at residues 404–492 (KPSSHQGDSL…SVFSDTPIVV (89 aa)) is disordered. Polar residues predominate over residues 407–423 (SHQGDSLSSSMLSTTPN). Basic and acidic residues predominate over residues 430–441 (GDKDDGFDRRVA). Ser476 and Ser480 each carry phosphoserine.

The protein belongs to the immunoglobulin superfamily. AMIGO family. In terms of assembly, homodimer, and heterodimer with AMIGO2 and AMIGO3. Interacts with KCNB1. As to expression, expressed in hippocampal and cortical neurons (at protein level). High levels in cerebellum, cerebrum, and retina. Low levels in liver, kidney, small intestine, spleen, lung and heart.

It localises to the cell membrane. The protein resides in the perikaryon. It is found in the cell projection. The protein localises to the dendrite. Its function is as follows. Promotes growth and fasciculation of neurites from cultured hippocampal neurons. May be involved in fasciculation as well as myelination of developing neural axons. May have a role in regeneration as well as neural plasticity in the adult nervous system. May mediate homophilic as well as heterophilic cell-cell interaction and contribute to signal transduction through its intracellular domain. Assembled with KCNB1 modulates the gating characteristics of the delayed rectifier voltage-dependent potassium channel KCNB1. In Mus musculus (Mouse), this protein is Amphoterin-induced protein 1.